We begin with the raw amino-acid sequence, 94 residues long: Large ribosomal subunit protein bL27 (94 aa).

The propeptide occupies 1–9 (MLKLNLQFF). The tract at residues 13 to 32 (KGLGSTKNGRDSESKRLGAK) is disordered. Over residues 20–32 (NGRDSESKRLGAK) the composition is skewed to basic and acidic residues.

This sequence belongs to the bacterial ribosomal protein bL27 family. In terms of processing, the N-terminus is cleaved by ribosomal processing cysteine protease Prp.

The polypeptide is Large ribosomal subunit protein bL27 (Staphylococcus saprophyticus subsp. saprophyticus (strain ATCC 15305 / DSM 20229 / NCIMB 8711 / NCTC 7292 / S-41)).